A 492-amino-acid polypeptide reads, in one-letter code: Regulatory protein ViaA (492 aa).

The protein belongs to the ViaA family. In terms of assembly, homodimer. Interacts with RavA.

The protein localises to the cytoplasm. In terms of biological role, component of the RavA-ViaA chaperone complex, which may act on the membrane to optimize the function of some of the respiratory chains. ViaA stimulates the ATPase activity of RavA. The protein is Regulatory protein ViaA of Pectobacterium carotovorum subsp. carotovorum (strain PC1).